Consider the following 360-residue polypeptide: 3-isopropylmalate dehydrogenase (360 aa).

76-89 contacts NAD(+); it reads GPKWDTIERDIRPE. Substrate contacts are provided by Arg96, Arg106, Arg134, and Asp224. Asp224, Asp248, and Asp252 together coordinate Mg(2+). An NAD(+)-binding site is contributed by 282 to 294; sequence GSAPDIAGKGIAN.

It belongs to the isocitrate and isopropylmalate dehydrogenases family. LeuB type 1 subfamily. Homodimer. Requires Mg(2+) as cofactor. Mn(2+) serves as cofactor.

The protein localises to the cytoplasm. It catalyses the reaction (2R,3S)-3-isopropylmalate + NAD(+) = 4-methyl-2-oxopentanoate + CO2 + NADH. It participates in amino-acid biosynthesis; L-leucine biosynthesis; L-leucine from 3-methyl-2-oxobutanoate: step 3/4. In terms of biological role, catalyzes the oxidation of 3-carboxy-2-hydroxy-4-methylpentanoate (3-isopropylmalate) to 3-carboxy-4-methyl-2-oxopentanoate. The product decarboxylates to 4-methyl-2 oxopentanoate. The sequence is that of 3-isopropylmalate dehydrogenase from Pseudomonas fluorescens (strain Pf0-1).